The following is a 341-amino-acid chain: Heat-inducible transcription repressor HrcA (341 aa).

Belongs to the HrcA family.

Negative regulator of class I heat shock genes (grpE-dnaK-dnaJ and groELS operons). Prevents heat-shock induction of these operons. The chain is Heat-inducible transcription repressor HrcA from Corynebacterium jeikeium (strain K411).